A 337-amino-acid chain; its full sequence is Eukaryotic translation initiation factor 3 subunit H (337 aa).

Residues 21-153 (VQCDGLAVMK…LKAYRLTPQA (133 aa)) form the MPN domain.

This sequence belongs to the eIF-3 subunit H family. In terms of assembly, component of the eukaryotic translation initiation factor 3 (eIF-3) complex. The eIF-3 complex interacts with pix. Interacts with mxt.

The protein localises to the cytoplasm. Functionally, component of the eukaryotic translation initiation factor 3 (eIF-3) complex, which is involved in protein synthesis of a specialized repertoire of mRNAs and, together with other initiation factors, stimulates binding of mRNA and methionyl-tRNAi to the 40S ribosome. The eIF-3 complex specifically targets and initiates translation of a subset of mRNAs involved in cell proliferation. This is Eukaryotic translation initiation factor 3 subunit H from Drosophila grimshawi (Hawaiian fruit fly).